We begin with the raw amino-acid sequence, 399 residues long: Acetate kinase (399 aa).

Mg(2+) is bound at residue Asn-7. ATP is bound at residue Lys-14. Arg-90 lines the substrate pocket. Asp-147 functions as the Proton donor/acceptor in the catalytic mechanism. ATP contacts are provided by residues 207–211 (HLGNG), 282–284 (DFR), and 330–334 (GIGEN). Glu-385 is a Mg(2+) binding site.

This sequence belongs to the acetokinase family. In terms of assembly, homodimer. It depends on Mg(2+) as a cofactor. Mn(2+) serves as cofactor.

It localises to the cytoplasm. It catalyses the reaction acetate + ATP = acetyl phosphate + ADP. The protein operates within metabolic intermediate biosynthesis; acetyl-CoA biosynthesis; acetyl-CoA from acetate: step 1/2. Its function is as follows. Catalyzes the formation of acetyl phosphate from acetate and ATP. Can also catalyze the reverse reaction. This is Acetate kinase from Caldicellulosiruptor bescii (strain ATCC BAA-1888 / DSM 6725 / KCTC 15123 / Z-1320) (Anaerocellum thermophilum).